The following is a 407-amino-acid chain: Aminomethyltransferase, mitochondrial (407 aa).

Residues 1-29 (MRGGLWQVGQSITRRLGQSDKKTIVRRWY) constitute a mitochondrion transit peptide. Substrate-binding residues include Glu-234, Arg-265, and Tyr-403.

It belongs to the GcvT family. The glycine cleavage system is composed of four proteins: P, T, L and H.

It is found in the mitochondrion. The catalysed reaction is N(6)-[(R)-S(8)-aminomethyldihydrolipoyl]-L-lysyl-[protein] + (6S)-5,6,7,8-tetrahydrofolate = N(6)-[(R)-dihydrolipoyl]-L-lysyl-[protein] + (6R)-5,10-methylene-5,6,7,8-tetrahydrofolate + NH4(+). In terms of biological role, the glycine cleavage system catalyzes the degradation of glycine. In Flaveria trinervia (Clustered yellowtops), this protein is Aminomethyltransferase, mitochondrial (GDCST).